Reading from the N-terminus, the 64-residue chain is Translation machinery-associated protein 7 homolog (64 aa).

The segment at 1–64 (MSGREGGKKK…QGGIKKSGKK (64 aa)) is disordered. The segment covering 27–44 (VAFKQKQKEQQKALDAAK) has biased composition (basic and acidic residues).

The protein belongs to the TMA7 family.

The sequence is that of Translation machinery-associated protein 7 homolog from Anopheles funestus (African malaria mosquito).